The chain runs to 491 residues: Cobyric acid synthase (491 aa).

Residues 250–437 enclose the GATase cobBQ-type domain; it reads QLRVVVPVLP…VHGVFDHPQA (188 aa). Cys331 functions as the Nucleophile in the catalytic mechanism. The active site involves His429.

This sequence belongs to the CobB/CobQ family. CobQ subfamily.

The protein operates within cofactor biosynthesis; adenosylcobalamin biosynthesis. Functionally, catalyzes amidations at positions B, D, E, and G on adenosylcobyrinic A,C-diamide. NH(2) groups are provided by glutamine, and one molecule of ATP is hydrogenolyzed for each amidation. This chain is Cobyric acid synthase, found in Xanthomonas axonopodis pv. citri (strain 306).